The chain runs to 273 residues: uncharacterized protein (273 aa).

10–34 (VITGAATGIGQATAEVFANEGARVI) contacts NAD(+). Ser142 serves as a coordination point for substrate. Tyr155 (proton acceptor) is an active-site residue.

The protein belongs to the short-chain dehydrogenases/reductases (SDR) family.

This is an uncharacterized protein from Bacillus subtilis (strain 168).